A 367-amino-acid polypeptide reads, in one-letter code: Queuine tRNA-ribosyltransferase (367 aa).

D89 acts as the Proton acceptor in catalysis. Substrate contacts are provided by residues 89 to 93, D143, Q185, and G212; that span reads DSGGF. The segment at 243–249 is RNA binding; the sequence is GVGTPSD. The Nucleophile role is filled by D262. The segment at 267–271 is RNA binding; important for wobble base 34 recognition; that stretch reads TRNAR. Positions 300, 302, 305, and 331 each coordinate Zn(2+).

Belongs to the queuine tRNA-ribosyltransferase family. As to quaternary structure, homodimer. Within each dimer, one monomer is responsible for RNA recognition and catalysis, while the other monomer binds to the replacement base PreQ1. It depends on Zn(2+) as a cofactor.

It catalyses the reaction 7-aminomethyl-7-carbaguanine + guanosine(34) in tRNA = 7-aminomethyl-7-carbaguanosine(34) in tRNA + guanine. Its pathway is tRNA modification; tRNA-queuosine biosynthesis. In terms of biological role, catalyzes the base-exchange of a guanine (G) residue with the queuine precursor 7-aminomethyl-7-deazaguanine (PreQ1) at position 34 (anticodon wobble position) in tRNAs with GU(N) anticodons (tRNA-Asp, -Asn, -His and -Tyr). Catalysis occurs through a double-displacement mechanism. The nucleophile active site attacks the C1' of nucleotide 34 to detach the guanine base from the RNA, forming a covalent enzyme-RNA intermediate. The proton acceptor active site deprotonates the incoming PreQ1, allowing a nucleophilic attack on the C1' of the ribose to form the product. After dissociation, two additional enzymatic reactions on the tRNA convert PreQ1 to queuine (Q), resulting in the hypermodified nucleoside queuosine (7-(((4,5-cis-dihydroxy-2-cyclopenten-1-yl)amino)methyl)-7-deazaguanosine). The protein is Queuine tRNA-ribosyltransferase of Thiobacillus denitrificans (strain ATCC 25259 / T1).